The sequence spans 268 residues: Eukaryotic translation initiation factor 3 subunit J (268 aa).

3 disordered regions span residues 1–27 (MSWD…DDEF), 40–63 (DAEE…KVDK), and 217–249 (LAKV…KKDQ). Positions 47-58 (QKQKPKAAPKAA) are enriched in basic residues. Residues 191-221 (IESIRQTVATLNVLIKEKERQERQARLAKVK) adopt a coiled-coil conformation.

This sequence belongs to the eIF-3 subunit J family. As to quaternary structure, component of the eukaryotic translation initiation factor 3 (eIF-3) complex.

Its subcellular location is the cytoplasm. Component of the eukaryotic translation initiation factor 3 (eIF-3) complex, which is involved in protein synthesis of a specialized repertoire of mRNAs and, together with other initiation factors, stimulates binding of mRNA and methionyl-tRNAi to the 40S ribosome. The eIF-3 complex specifically targets and initiates translation of a subset of mRNAs involved in cell proliferation. This chain is Eukaryotic translation initiation factor 3 subunit J, found in Eremothecium gossypii (strain ATCC 10895 / CBS 109.51 / FGSC 9923 / NRRL Y-1056) (Yeast).